A 379-amino-acid chain; its full sequence is F420-dependent formate dehydrogenase subunit beta (379 aa).

2 4Fe-4S ferredoxin-type domains span residues 271–301 (EKWK…CSLE) and 321–351 (IRLS…YIFH). The [4Fe-4S] cluster site is built by cysteine 280, cysteine 283, cysteine 286, cysteine 290, cysteine 330, cysteine 333, cysteine 336, and cysteine 340.

The protein belongs to the FrhB family. In terms of assembly, dimer of an alpha (FdhA) and a beta (FdhB) subunit. [4Fe-4S] cluster is required as a cofactor. FAD serves as cofactor. The cofactor is Zn(2+).

It catalyses the reaction oxidized coenzyme F420-(gamma-L-Glu)(n) + formate + 2 H(+) = reduced coenzyme F420-(gamma-L-Glu)(n) + CO2. Its function is as follows. Catalyzes the oxidation of formate to carbon dioxide, with coenzyme F420 as the electron acceptor. The chain is F420-dependent formate dehydrogenase subunit beta (fdhB) from Methanocaldococcus jannaschii (strain ATCC 43067 / DSM 2661 / JAL-1 / JCM 10045 / NBRC 100440) (Methanococcus jannaschii).